The primary structure comprises 477 residues: Glycogen synthase (477 aa).

Lys-15 is an ADP-alpha-D-glucose binding site.

It belongs to the glycosyltransferase 1 family. Bacterial/plant glycogen synthase subfamily.

It carries out the reaction [(1-&gt;4)-alpha-D-glucosyl](n) + ADP-alpha-D-glucose = [(1-&gt;4)-alpha-D-glucosyl](n+1) + ADP + H(+). Its pathway is glycan biosynthesis; glycogen biosynthesis. Its function is as follows. Synthesizes alpha-1,4-glucan chains using ADP-glucose. This Edwardsiella ictaluri (strain 93-146) protein is Glycogen synthase.